We begin with the raw amino-acid sequence, 501 residues long: Orsellinic acid/F9775 biosynthesis cluster protein D (501 aa).

The tract at residues 137–189 is disordered; sequence EVTPTTEDEDDEENESENDEEEGDVDLEEQEDDNGGRQSTTVTTSPGPSAPSV. The segment covering 142–169 has biased composition (acidic residues); that stretch reads TEDEDDEENESENDEEEGDVDLEEQEDD. Residues 172-183 are compositionally biased toward polar residues; it reads GRQSTTVTTSPG.

Its function is as follows. Part of the gene cluster that mediates the biosynthesis of orsellinic acid, as well as of the cathepsin K inhibitors F9775 A and F9775 B. The non-reducing polyketide synthase orsA produces orsellinic acid by condensing acetyl-CoA with 3 malonyl-CoA units. Further modifications by the decarboxylase orsB and the tyrosinase-like protein orsC lead to the production of F9775 A and F9775 B. The functions of orsD and orsE remain unclear since only orsB and orsC are required to convert orsellinic acid into F9775 A and F9775 B. In Emericella nidulans (strain FGSC A4 / ATCC 38163 / CBS 112.46 / NRRL 194 / M139) (Aspergillus nidulans), this protein is Orsellinic acid/F9775 biosynthesis cluster protein D.